Reading from the N-terminus, the 134-residue chain is Small ribosomal subunit protein uS12 (134 aa).

The disordered stretch occupies residues 1-27 (MPTIQQLVRKGRESFADKSKSPALNSC). A compositionally biased stretch (basic and acidic residues) spans 10-20 (KGRESFADKSK). Asp-89 is subject to 3-methylthioaspartic acid. Positions 103–134 (DTAGVNGRTQRRSKYGAKRPKPGQAPAAKGKK) are disordered. The segment covering 111-123 (TQRRSKYGAKRPK) has biased composition (basic residues). Positions 124-134 (PGQAPAAKGKK) are enriched in low complexity.

It belongs to the universal ribosomal protein uS12 family. As to quaternary structure, part of the 30S ribosomal subunit. Contacts proteins S8 and S17. May interact with IF1 in the 30S initiation complex.

With S4 and S5 plays an important role in translational accuracy. Its function is as follows. Interacts with and stabilizes bases of the 16S rRNA that are involved in tRNA selection in the A site and with the mRNA backbone. Located at the interface of the 30S and 50S subunits, it traverses the body of the 30S subunit contacting proteins on the other side and probably holding the rRNA structure together. The combined cluster of proteins S8, S12 and S17 appears to hold together the shoulder and platform of the 30S subunit. In Porphyromonas gingivalis (strain ATCC 33277 / DSM 20709 / CIP 103683 / JCM 12257 / NCTC 11834 / 2561), this protein is Small ribosomal subunit protein uS12.